Reading from the N-terminus, the 158-residue chain is MLGKTALSTLCASRQAPITLAARGIANIPAHEYHIRFDQKVGRKRPAQDVLDRFKRLNNGMWIHAHPGRHKLRYMKDETWQKTSLYYETCTKEQCEILDKLMTPYWLRPKHYPNDPYSAYNVRHNVTSPRVDDRGNFVRERKKVLMDDSTSKRFFKDC.

The protein belongs to the bacterial ribosomal protein bL35 family.

The protein resides in the mitochondrion. This chain is Large ribosomal subunit protein bL35m (mrpl-35), found in Caenorhabditis elegans.